The sequence spans 1225 residues: Chromosome-associated kinesin KIF4 (1225 aa).

A Kinesin motor domain is found at 9-338; that stretch reads IPVRVVRCRP…LRYADRARKI (330 aa). 88-95 contributes to the ATP binding site; the sequence is GQTGSGKT. Positions 352-1003 form a coiled coil; the sequence is ELNHLKQQVQ…LKQKMLLVQV (652 aa). Disordered regions lie at residues 498–520, 717–744, and 1006–1047; these read QDAAGEAETGQVTKRSSDDFTTQ, NKRLKDALQKQREAADKRKESQNRGMEG, and GQKL…PTPE. The segment covering 507–520 has biased composition (polar residues); the sequence is GQVTKRSSDDFTTQ. Over residues 719-738 the composition is skewed to basic and acidic residues; the sequence is RLKDALQKQREAADKRKESQ. Residues 1004 to 1225 are globular; the sequence is ASGQKLRRDQ…GCTPIKEEID (222 aa).

This sequence belongs to the TRAFAC class myosin-kinesin ATPase superfamily. Kinesin family. Chromokinesin subfamily. Requires [2Fe-2S] cluster as cofactor. It depends on [4Fe-4S] cluster as a cofactor. In terms of tissue distribution, expressed in proliferating cells; neuroepithelium of embryos.

The protein resides in the nucleus. Its subcellular location is the chromosome. It is found in the cytoplasm. It localises to the cytoskeleton. In terms of biological role, iron-sulfur (Fe-S) cluster binding motor protein that has a role in chromosome segregation during mitosis. Required for mitotic chromosomal positioning and bipolar spindle stabilization. The polypeptide is Chromosome-associated kinesin KIF4 (KIF4) (Gallus gallus (Chicken)).